Here is a 478-residue protein sequence, read N- to C-terminus: 7-dehydrocholesterol reductase (478 aa).

The interval 1 to 28 (MMASDRVRKRHKGSANGAQTVEKEPSKE) is disordered. A run of 6 helical transmembrane segments spans residues 43–63 (LSGV…FIMA), 97–117 (WAAA…YMCV), 180–200 (WIPL…FAFI), 269–289 (VTNS…DFFW), 309–329 (LGWG…LYLV), and 333–353 (IQLS…GYYI). NADP(+)-binding positions include K361, R365, M398, W403, and 410–411 (NY). A helical membrane pass occupies residues 424-444 (ACGGNHLLPYFYIIYMTILLV). NADP(+)-binding positions include D450, 454–458 (CSNKY), and Y465.

Belongs to the ERG4/ERG24 family.

It localises to the endoplasmic reticulum membrane. It catalyses the reaction cholesterol + NADP(+) = 7-dehydrocholesterol + NADPH + H(+). The catalysed reaction is 7-dehydrodesmosterol + NADPH + H(+) = desmosterol + NADP(+). Its pathway is steroid biosynthesis; cholesterol biosynthesis. Catalyzes the last step of the cholesterol synthesis pathway, which transforms cholesta-5,7-dien-3beta-ol (7-dehydrocholesterol,7-DHC) into cholesterol by reducing the C7-C8 double bond of its sterol core. Can also metabolize cholesta-5,7,24-trien-3beta-ol (7-dehydrodemosterol, 7-DHD) to desmosterol, which is then metabolized by the Delta(24)-sterol reductase (DHCR24) to cholesterol. Modulates ferroptosis (a form of regulated cell death driven by iron-dependent lipid peroxidation) through the metabolic breakdown of the anti-ferroptotic metabolites 7-DHC and 7-DHD which, when accumulated, divert the propagation of peroxyl radical-mediated damage from phospholipid components to its sterol core, protecting plasma and mitochondrial membranes from phospholipid autoxidation. This is 7-dehydrocholesterol reductase (dhcr7) from Danio rerio (Zebrafish).